Consider the following 93-residue polypeptide: MDGIKYAVFTDKSIRLLGKNQYTSNVESGSTRTEIKHWVELFFGVKVIAMNSHQLPRKGRRMGPIMAHTMHYRRMIITLQPGYSIPPLRKKRT.

It belongs to the universal ribosomal protein uL23 family. Part of the 50S ribosomal subunit.

Its subcellular location is the plastid. It localises to the chloroplast. Its function is as follows. Binds to 23S rRNA. This chain is Large ribosomal subunit protein uL23cz/uL23cy (rpl23-A), found in Citrus sinensis (Sweet orange).